The chain runs to 613 residues: Serine protease FAM111A (613 aa).

Residues 1-72 are disordered; that stretch reads MSCKKRKSQI…TRQDQTPPLN (72 aa). Residue K19 forms a Glycyl lysine isopeptide (Lys-Gly) (interchain with G-Cter in SUMO2) linkage. A Phosphoserine modification is found at S25. K29 participates in a covalent cross-link: Glycyl lysine isopeptide (Lys-Gly) (interchain with G-Cter in SUMO2). A compositionally biased stretch (basic and acidic residues) spans 40 to 56; the sequence is VDSKKMPRDITNTRDQR. K62 is covalently cross-linked (Glycyl lysine isopeptide (Lys-Gly) (interchain with G-Cter in SUMO2)). Catalysis depends on charge relay system residues H383, D437, and S543.

It belongs to the FAM111 family. In terms of assembly, interacts (via PIP-box) with PCNA; this interaction is direct. Post-translationally, autocatalytically cleaved; autocatalytic cleavage takes place in trans.

It is found in the nucleus. The protein localises to the chromosome. The protein resides in the cytoplasm. Single-stranded DNA-binding serine protease that mediates the proteolytic cleavage of covalent DNA-protein cross-links (DPCs) during DNA synthesis, thereby playing a key role in maintaining genomic integrity. DPCs are highly toxic DNA lesions that interfere with essential chromatin transactions, such as replication and transcription, and which are induced by reactive agents, such as UV light or formaldehyde. Protects replication fork from stalling by removing DPCs, such as covalently trapped topoisomerase 1 (TOP1) adducts on DNA lesion, or poly(ADP-ribose) polymerase 1 (PARP1)-DNA complexes trapped by PARP inhibitors. Required for PCNA loading on replication sites. Promotes S-phase entry and DNA synthesis. This is Serine protease FAM111A from Mus musculus (Mouse).